We begin with the raw amino-acid sequence, 255 residues long: Thiazole synthase (255 aa).

The Schiff-base intermediate with DXP role is filled by K96. 1-deoxy-D-xylulose 5-phosphate is bound by residues G157, 183 to 184 (AG), and 205 to 206 (NT).

The protein belongs to the ThiG family. In terms of assembly, homotetramer. Forms heterodimers with either ThiH or ThiS.

It localises to the cytoplasm. It catalyses the reaction [ThiS sulfur-carrier protein]-C-terminal-Gly-aminoethanethioate + 2-iminoacetate + 1-deoxy-D-xylulose 5-phosphate = [ThiS sulfur-carrier protein]-C-terminal Gly-Gly + 2-[(2R,5Z)-2-carboxy-4-methylthiazol-5(2H)-ylidene]ethyl phosphate + 2 H2O + H(+). It functions in the pathway cofactor biosynthesis; thiamine diphosphate biosynthesis. Its function is as follows. Catalyzes the rearrangement of 1-deoxy-D-xylulose 5-phosphate (DXP) to produce the thiazole phosphate moiety of thiamine. Sulfur is provided by the thiocarboxylate moiety of the carrier protein ThiS. In vitro, sulfur can be provided by H(2)S. The chain is Thiazole synthase from Bacillus pumilus (strain SAFR-032).